A 303-amino-acid polypeptide reads, in one-letter code: Recombination-associated protein RdgC (303 aa).

It belongs to the RdgC family.

It is found in the cytoplasm. The protein localises to the nucleoid. In terms of biological role, may be involved in recombination. The protein is Recombination-associated protein RdgC of Shewanella halifaxensis (strain HAW-EB4).